The following is a 448-amino-acid chain: FAD-linked oxidoreductase nodO (448 aa).

The 172-residue stretch at proline 35 to leucine 206 folds into the FAD-binding PCMH-type domain.

It belongs to the oxygen-dependent FAD-linked oxidoreductase family. FAD serves as cofactor.

It functions in the pathway secondary metabolite biosynthesis. In terms of biological role, FAD-linked oxidoreductase; part of the gene cluster that mediates the biosynthesis of the indole diterpenes nodulisporic acids (NA). Nodulisporic acid A (NAA) and its chemically modified derivatives are of particular significance because of their highly potent insecticidal activity against blood-feeding arthropods and lack of observable adverse effects on mammals, in particular the tremogenicity associated with the paspaline-derived IDTs is not observed. The geranylgeranyl diphosphate (GGPP) synthase ggs1, localized outside of the cluster, is proposed to catalyze the first step in nodulisporic acid biosynthesis via conversion of farnesyl pyrophosphate and isopentyl pyrophosphate into geranylgeranyl pyrophosphate (GGPP). Condensation of indole-3-glycerol phosphate with GGPP by the prenyl transferase nodC then forms 3-geranylgeranylindole (3-GGI). Epoxidation by the FAD-dependent monooxygenase nodM leads to a single-epoxidized-GGI that is substrate of the terpene cyclase nodB for cyclization to yield emindole SB. The terminal methyl carbon, C28, of emindole SB is then oxidized by the cytochrome P450 monooxygenase nodW to produce nodulisporic acid F (NAF), the pentacyclic core of NAA. NAF is converted to nodulisporic acid E (NAE) via prenylation. This step is probably performed by one of the indole diterpene prenyltransferases nodD1 or nodD2. Several oxidation steps performed by the FAD-linked oxidoreductase nodO and one of the cytochrome P450 monooxygenase nodR, nodX or nodZ further convert NAE to nodulisporic acid D (NAD). NAD is substrate of cytochrome P450 monooxygenase nodJ to produce the precursor of nodulisporic acid C (NAC), converted to NAC by one of the indole diterpene prenyltransferases nodD1 or nodD2. The FAD-dependent monooxygenase nodY2 then oxidizes NAC to nodulisporic acid B (NAB). Finally NAB is converted to NAA by one of the cytochrome P450 monooxygenases nodR, nodX or nodZ. This Hypoxylon pulicicidum protein is FAD-linked oxidoreductase nodO.